Reading from the N-terminus, the 294-residue chain is Negative regulator of the PHO system (294 aa).

Residues 7–289 (FQQLEKLGEG…ARQSLEHPWF (283 aa)) form the Protein kinase domain. Residues 13–21 (LGEGTYATV) and lysine 36 each bind ATP. Catalysis depends on aspartate 130, which acts as the Proton acceptor.

This sequence belongs to the protein kinase superfamily. CMGC Ser/Thr protein kinase family. CDC2/CDKX subfamily. In terms of assembly, interacts with a number of cyclins.

It catalyses the reaction L-seryl-[protein] + ATP = O-phospho-L-seryl-[protein] + ADP + H(+). It carries out the reaction L-threonyl-[protein] + ATP = O-phospho-L-threonyl-[protein] + ADP + H(+). When phosphate concentrations are high it phosphorylates the PHO4 transcription factor thus establishing repression. The polypeptide is Negative regulator of the PHO system (PHO85) (Yarrowia lipolytica (strain CLIB 122 / E 150) (Yeast)).